A 325-amino-acid chain; its full sequence is MDKSSGELVTLTPNNNNTVQPVALMRLGVFVPTLKSLKNSKKNTLSRTDATEELTRLSLARAEGFDKVEITGPRLDMDNDFKTWVGIIHSFARHNVIGDKVELPFVEFAKLCGIPSSQSSRRLRERISPSLKRIAGTVISFSRTDEKHTREYITHLVQSAYYDTERDIVQLQADPRLFELYQFDRKVLLQLKAINALKRRESAQALYTFIESLPRDPAPISLARLRARLNLKSPVFSQNQTVRRAMEQLREIGYLDYTEIQRGRTKFFCIHYRRPRLKAPNDESKENPLPPSPAEKVSPEMAEKLALLEKLGITLDDLEKLFKSR.

The tract at residues 279-298 (APNDESKENPLPPSPAEKVS) is disordered.

This sequence belongs to the initiator RepB protein family.

Functionally, this protein is essential for plasmid replication; it is involved in copy control functions. In vitro, binds to the DNA repeat units, BCDD'D'', EFG and HIJ. The polypeptide is RepFIB replication protein A (repB) (Escherichia coli (strain K12)).